We begin with the raw amino-acid sequence, 436 residues long: 3-ketoacyl-CoA thiolase (436 aa).

C99 functions as the Acyl-thioester intermediate in the catalytic mechanism. Active-site proton acceptor residues include H392 and C422.

This sequence belongs to the thiolase-like superfamily. Thiolase family. As to quaternary structure, heterotetramer of two alpha chains (FadJ) and two beta chains (FadI).

The protein localises to the cytoplasm. The catalysed reaction is an acyl-CoA + acetyl-CoA = a 3-oxoacyl-CoA + CoA. The protein operates within lipid metabolism; fatty acid beta-oxidation. Catalyzes the final step of fatty acid oxidation in which acetyl-CoA is released and the CoA ester of a fatty acid two carbons shorter is formed. The protein is 3-ketoacyl-CoA thiolase of Shewanella woodyi (strain ATCC 51908 / MS32).